The sequence spans 150 residues: 6,7-dimethyl-8-ribityllumazine synthase (150 aa).

5-amino-6-(D-ribitylamino)uracil-binding positions include Phe11, 42–44 (IFE), and 73–75 (CAI). 78-79 (ES) contacts (2S)-2-hydroxy-3-oxobutyl phosphate. The active-site Proton donor is the His81. 5-amino-6-(D-ribitylamino)uracil is bound at residue Asn106. Arg120 lines the (2S)-2-hydroxy-3-oxobutyl phosphate pocket.

It belongs to the DMRL synthase family.

It catalyses the reaction (2S)-2-hydroxy-3-oxobutyl phosphate + 5-amino-6-(D-ribitylamino)uracil = 6,7-dimethyl-8-(1-D-ribityl)lumazine + phosphate + 2 H2O + H(+). It participates in cofactor biosynthesis; riboflavin biosynthesis; riboflavin from 2-hydroxy-3-oxobutyl phosphate and 5-amino-6-(D-ribitylamino)uracil: step 1/2. Its function is as follows. Catalyzes the formation of 6,7-dimethyl-8-ribityllumazine by condensation of 5-amino-6-(D-ribitylamino)uracil with 3,4-dihydroxy-2-butanone 4-phosphate. This is the penultimate step in the biosynthesis of riboflavin. The polypeptide is 6,7-dimethyl-8-ribityllumazine synthase (Paramagnetospirillum magneticum (strain ATCC 700264 / AMB-1) (Magnetospirillum magneticum)).